The chain runs to 391 residues: 8-amino-7-oxononanoate synthase (391 aa).

R19 serves as a coordination point for substrate. 106–107 (GY) lines the pyridoxal 5'-phosphate pocket. H131 serves as a coordination point for substrate. Residues S178, H206, and T234 each coordinate pyridoxal 5'-phosphate. At K237 the chain carries N6-(pyridoxal phosphate)lysine. T353 contributes to the substrate binding site.

This sequence belongs to the class-II pyridoxal-phosphate-dependent aminotransferase family. BioF subfamily. Homodimer. The cofactor is pyridoxal 5'-phosphate.

It carries out the reaction 6-carboxyhexanoyl-[ACP] + L-alanine + H(+) = (8S)-8-amino-7-oxononanoate + holo-[ACP] + CO2. Its pathway is cofactor biosynthesis; biotin biosynthesis. Catalyzes the decarboxylative condensation of pimeloyl-[acyl-carrier protein] and L-alanine to produce 8-amino-7-oxononanoate (AON), [acyl-carrier protein], and carbon dioxide. The protein is 8-amino-7-oxononanoate synthase of Geobacter sulfurreducens (strain ATCC 51573 / DSM 12127 / PCA).